A 369-amino-acid chain; its full sequence is MKRSGVGSLFAGAHIAEAVPLAPLTTLRVGPIARRVITCTSAEQVVAALRHLDSAAKTGADRPLVFAGGSNLVIAENLTDLTVVRLANSGITIDGNLVRAEAGAVFDDVVVRAIEQGLGGLECLSGIPGSAGATPVQNVGAYGAEVSDTITRVRLLDRCTGEVRWVSARDLRFGYRTSVLKHADGLAVPTVVLEVEFALDPSGRSAPLRYGELIAALNATSGERADPQAVREAVLALRARKGMVLDPTDHDTWSVGSFFTNPVVTQDVYERLAGDAATRKDGPVPHYPAPDGVKLAAGWLVERAGFGKGYPDAGAAPCRLSTKHALALTNRGGATAEDVVTLARAVRDGVHDVFGITLKPEPVLIGCML.

Residues 29 to 202 (VGPIARRVIT…LEVEFALDPS (174 aa)) enclose the FAD-binding PCMH-type domain. Residue R176 is part of the active site. The active-site Proton donor is the S257. E361 is a catalytic residue.

It belongs to the MurB family. FAD is required as a cofactor.

The protein resides in the cytoplasm. The catalysed reaction is UDP-N-acetyl-alpha-D-muramate + NADP(+) = UDP-N-acetyl-3-O-(1-carboxyvinyl)-alpha-D-glucosamine + NADPH + H(+). It functions in the pathway cell wall biogenesis; peptidoglycan biosynthesis. In terms of biological role, cell wall formation. This is UDP-N-acetylenolpyruvoylglucosamine reductase from Mycobacterium tuberculosis (strain ATCC 25177 / H37Ra).